A 124-amino-acid chain; its full sequence is Small ribosomal subunit protein eS6 (124 aa).

The protein belongs to the eukaryotic ribosomal protein eS6 family.

In Thermoplasma acidophilum (strain ATCC 25905 / DSM 1728 / JCM 9062 / NBRC 15155 / AMRC-C165), this protein is Small ribosomal subunit protein eS6.